A 223-amino-acid chain; its full sequence is Sigma non-opioid intracellular receptor 1 (223 aa).

Topologically, residues 1 to 9 (MPWAVGRRW) are lumenal. Residues 2–8 (PWAVGRR) are targeting to endoplasmic reticulum-associated lipid droplets. Residues 10–30 (AWITLFLTIVAVLIQAVWLWL) form a helical membrane-spanning segment. Topologically, residues 31–223 (GTQSFVFQRE…LTTYLFGQDP (193 aa)) are cytoplasmic. Residues 99–106 (SLSEYVLL) form an important for ligand-binding region. The C-terminal hydrophobic region stretch occupies residues 177–223 (VIPSTLAFALSDTIFSTQDFLTLFYTLRAYARGLRLELTTYLFGQDP).

This sequence belongs to the ERG2 family. Homotrimer. Interacts with KCNA2; cocaine consumption leads to increased interaction. Forms a ternary complex with ANK2 and ITPR3. The complex is disrupted by agonists. Interacts with KCNA4. Interacts with RNF112 in an oxidative stress-regulated manner. As to expression, expressed in ependymocytes and neurons throughout the CNS from the olfactory bulb to the spinal cord. Expressed by progenitor, mature and satellite oligodendrocytes and by Schwann cells (at protein level). Expressed in liver, intestine, kidney, brain, lung and heart. Expressed by retinal cells.

Its subcellular location is the nucleus inner membrane. It is found in the nucleus outer membrane. The protein resides in the nucleus envelope. It localises to the cytoplasmic vesicle. The protein localises to the endoplasmic reticulum membrane. Its subcellular location is the membrane. It is found in the lipid droplet. The protein resides in the cell junction. It localises to the cell membrane. The protein localises to the cell projection. Its subcellular location is the growth cone. It is found in the postsynaptic density membrane. Its function is as follows. Functions in lipid transport from the endoplasmic reticulum and is involved in a wide array of cellular functions probably through regulation of the biogenesis of lipid microdomains at the plasma membrane. Involved in the regulation of different receptors it plays a role in BDNF signaling and EGF signaling. Also regulates ion channels like the potassium channel and could modulate neurotransmitter release. Plays a role in calcium signaling through modulation together with ANK2 of the ITP3R-dependent calcium efflux at the endoplasmic reticulum. Plays a role in several other cell functions including proliferation, survival and death. Originally identified for its ability to bind various psychoactive drugs it is involved in learning processes, memory and mood alteration. Necessary for proper mitochondrial axonal transport in motor neurons, in particular the retrograde movement of mitochondria. Plays a role in protecting cells against oxidative stress-induced cell death via its interaction with RNF112. The sequence is that of Sigma non-opioid intracellular receptor 1 (Sigmar1) from Rattus norvegicus (Rat).